Here is a 360-residue protein sequence, read N- to C-terminus: Ribosomal RNA large subunit methyltransferase M (360 aa).

Residues Ser187, 220–223, Asp239, Asp259, and Asp276 each bind S-adenosyl-L-methionine; that span reads CPGG. The Proton acceptor role is filled by Lys305.

Belongs to the class I-like SAM-binding methyltransferase superfamily. RNA methyltransferase RlmE family. RlmM subfamily. As to quaternary structure, monomer.

It is found in the cytoplasm. The catalysed reaction is cytidine(2498) in 23S rRNA + S-adenosyl-L-methionine = 2'-O-methylcytidine(2498) in 23S rRNA + S-adenosyl-L-homocysteine + H(+). In terms of biological role, catalyzes the 2'-O-methylation at nucleotide C2498 in 23S rRNA. The protein is Ribosomal RNA large subunit methyltransferase M of Shewanella pealeana (strain ATCC 700345 / ANG-SQ1).